We begin with the raw amino-acid sequence, 166 residues long: MAQRLLLRRFLTSVISRKPPQGVWASLTSTSLQTPPYNAGGLTGTPSPARTFHTTRVCSTTFNVQDGPDFQDRVVNSETPVVVDFHAQWCGPCKILGPRLEKMVAKQHGKVVMAKVDIDDHTDLAIEYEVSAVPTVLAIKNGDVVDKFVGIKDEDQLEAFLKKLIG.

A mitochondrion-targeting transit peptide spans 1-59; sequence MAQRLLLRRFLTSVISRKPPQGVWASLTSTSLQTPPYNAGGLTGTPSPARTFHTTRVCS. The Thioredoxin domain occupies 61–166; it reads TFNVQDGPDF…LEAFLKKLIG (106 aa). Catalysis depends on nucleophile residues Cys-90 and Cys-93. A disulfide bond links Cys-90 and Cys-93. Position 152 is an N6-acetyllysine; alternate (Lys-152). Lys-152 is subject to N6-succinyllysine; alternate.

Belongs to the thioredoxin family. Monomer. Expressed in several tissues with the highest expression levels in heart, muscle, kidney and adrenal gland.

It localises to the mitochondrion. Functionally, important for the control of mitochondrial reactive oxygen species homeostasis, apoptosis regulation and cell viability. Is involved in various redox reactions including the reduction of protein disulfide bonds, through the reversible oxidation of its active center dithiol to a disulfide. The polypeptide is Thioredoxin, mitochondrial (Txn2) (Rattus norvegicus (Rat)).